A 317-amino-acid chain; its full sequence is MSVRNRVVLAPMSGVTDMPFRELAWRFGAGLVVTEMVASRELVNDTAESWSRLKAAGFRPHMVQLAGREAHWMAEAAKIAADHGADIIDINMGCPAKKVIGGYSGSALMRDPDHALGLIEATVKAVDIPVTLKMRLGWDENSINAPDIARRAEASGIQLVTIHGRTRMQFYEGRADWDAIRAVREVISVPLIANGDVETAHDAQEILRRSGADAVMIGRGCQGRPWHAGVLAGAAEPRREDIADIAVEHYRMMLDFYGEAVAIRHARKHLGWYLERFAPALAGTEKAGIMTSRDPREVAARLYHALDAGALDGREAA.

FMN contacts are provided by residues 11 to 13 and Gln-64; that span reads PMS. The active-site Proton donor is the Cys-94. FMN is bound by residues Lys-133, 194–196, and 218–219; these read NGD and GR.

This sequence belongs to the Dus family. It depends on FMN as a cofactor.

It carries out the reaction a 5,6-dihydrouridine in tRNA + NAD(+) = a uridine in tRNA + NADH + H(+). The catalysed reaction is a 5,6-dihydrouridine in tRNA + NADP(+) = a uridine in tRNA + NADPH + H(+). Its function is as follows. Catalyzes the synthesis of 5,6-dihydrouridine (D), a modified base found in the D-loop of most tRNAs, via the reduction of the C5-C6 double bond in target uridines. The protein is Probable tRNA-dihydrouridine synthase (dus) of Rhizobium leguminosarum bv. phaseoli.